The following is a 114-amino-acid chain: MSYKPNLTAHMPAAALNAGSVHSPSTSMATSSQYRQLLSDYGPPSLGYTQGTGNSQVPQSKYAELLAIIEELGKEIRPTYAGSKSAMERLKRGIIHARSLVRECLAETERNARS.

A disordered region spans residues 18–57; that stretch reads AGSVHSPSTSMATSSQYRQLLSDYGPPSLGYTQGTGNSQV. Residues 19-24 form an interaction with CDK2AP2 region; it reads GSVHSP. The span at 20 to 36 shows a compositional bias: polar residues; it reads SVHSPSTSMATSSQYRQ. S45 is subject to Phosphoserine; by IKKE. Residues 47-57 show a composition bias toward polar residues; sequence GYTQGTGNSQV.

Belongs to the CDK2AP family. In terms of assembly, homodimer. Component of the nucleosome remodeling and deacetylase (NuRD) repressor complex, composed of core proteins MTA1, MTA2, MTA3, RBBP4, RBBP7, HDAC1, HDAC2, MBD2, MBD3, and peripherally associated proteins CDK2AP1, CDK2AP2, GATAD2A, GATAD2B, CHD3, CHD4 and CHD5. The exact stoichiometry of the NuRD complex is unknown, and some subunits such as MBD2 and MBD3, GATAD2A and GATAD2B, and CHD3, CHD4 and CHD5 define mutually exclusive NuRD complexes. Interacts with monomeric unphosphorylated CDK2. Interacts with CDK2AP2. Interacts with GATAD2A. Interacts with HDAC1. Interacts with HDAC2. Interacts with MBD2. Interacts with MBD3. Interacts with RBBP4. Interacts with RBBP7. Post-translationally, phosphorylated in vitro by IKBKE at Ser-45.

The protein localises to the nucleus. It localises to the chromosome. Its function is as follows. Inhibitor of cyclin-dependent kinase CDK2. Also acts as a component of the histone deacetylase NuRD complex which participates in the remodeling of chromatin. The sequence is that of Cyclin-dependent kinase 2-associated protein 1 (Cdk2ap1) from Mus musculus (Mouse).